The sequence spans 574 residues: Proline--tRNA ligase (574 aa).

It belongs to the class-II aminoacyl-tRNA synthetase family. ProS type 1 subfamily. Homodimer.

It is found in the cytoplasm. It carries out the reaction tRNA(Pro) + L-proline + ATP = L-prolyl-tRNA(Pro) + AMP + diphosphate. Functionally, catalyzes the attachment of proline to tRNA(Pro) in a two-step reaction: proline is first activated by ATP to form Pro-AMP and then transferred to the acceptor end of tRNA(Pro). As ProRS can inadvertently accommodate and process non-cognate amino acids such as alanine and cysteine, to avoid such errors it has two additional distinct editing activities against alanine. One activity is designated as 'pretransfer' editing and involves the tRNA(Pro)-independent hydrolysis of activated Ala-AMP. The other activity is designated 'posttransfer' editing and involves deacylation of mischarged Ala-tRNA(Pro). The misacylated Cys-tRNA(Pro) is not edited by ProRS. The sequence is that of Proline--tRNA ligase from Ralstonia pickettii (strain 12J).